A 357-amino-acid chain; its full sequence is Protein-glutamate methylesterase/protein-glutamine glutaminase (357 aa).

The 118-residue stretch at 3-120 folds into the Response regulatory domain; that stretch reads RVLVVDDSAF…SIDLYKVRDM (118 aa). A 4-aspartylphosphate modification is found at aspartate 54. One can recognise a CheB-type methylesterase domain in the interval 161–355; the sequence is FRAGKQLICI…AAIMTYMKKE (195 aa). Residues serine 173, histidine 200, and aspartate 296 contribute to the active site.

The protein belongs to the CheB family. Post-translationally, phosphorylated by CheA. Phosphorylation of the N-terminal regulatory domain activates the methylesterase activity.

Its subcellular location is the cytoplasm. It carries out the reaction [protein]-L-glutamate 5-O-methyl ester + H2O = L-glutamyl-[protein] + methanol + H(+). It catalyses the reaction L-glutaminyl-[protein] + H2O = L-glutamyl-[protein] + NH4(+). Functionally, involved in chemotaxis. Part of a chemotaxis signal transduction system that modulates chemotaxis in response to various stimuli. Catalyzes the demethylation of specific methylglutamate residues introduced into the chemoreceptors (methyl-accepting chemotaxis proteins or MCP) by CheR. Also mediates the irreversible deamidation of specific glutamine residues to glutamic acid. This Bacillus licheniformis (strain ATCC 14580 / DSM 13 / JCM 2505 / CCUG 7422 / NBRC 12200 / NCIMB 9375 / NCTC 10341 / NRRL NRS-1264 / Gibson 46) protein is Protein-glutamate methylesterase/protein-glutamine glutaminase.